The sequence spans 254 residues: 5-oxoprolinase subunit A (254 aa).

The protein belongs to the LamB/PxpA family. In terms of assembly, forms a complex composed of PxpA, PxpB and PxpC.

The catalysed reaction is 5-oxo-L-proline + ATP + 2 H2O = L-glutamate + ADP + phosphate + H(+). Catalyzes the cleavage of 5-oxoproline to form L-glutamate coupled to the hydrolysis of ATP to ADP and inorganic phosphate. The polypeptide is 5-oxoprolinase subunit A (Gluconobacter oxydans (strain 621H) (Gluconobacter suboxydans)).